A 514-amino-acid polypeptide reads, in one-letter code: LWamide neuropeptides (514 aa).

An N-terminal signal peptide occupies residues 1–22 (MALKCHLVLLAITLLLAQCSGS). The span at 23-53 (VDKKDSTTNHLDEKKTDSTEAHIVQETDALK) shows a compositional bias: basic and acidic residues. A propeptide spanning residues 23–75 (VDKKDSTTNHLDEKKTDSTEAHIVQETDALKENSYLGAEEESKEEDKKRSAAP) is cleaved from the precursor. Positions 23–180 (VDKKDSTTNH…PGLWGRSADA (158 aa)) are disordered. Residues Trp-81 and Trp-90 each carry the tryptophan amide modification. A propeptide spanning residues 93–97 (SADAG) is cleaved from the precursor. Tryptophan amide occurs at positions 102 and 111. Residues 114 to 118 (SADAG) constitute a propeptide that is removed on maturation. Trp-123 and Trp-132 each carry tryptophan amide. A propeptide spanning residues 135-139 (SADAG) is cleaved from the precursor. Tryptophan amide is present on residues Trp-144 and Trp-153. Positions 156-160 (SADAG) are excised as a propeptide. 2 positions are modified to tryptophan amide: Trp-165 and Trp-174. The propeptide occupies 177-181 (SADAR). Trp-186 bears the Tryptophan amide mark. Residues 190–199 (EIYALWGGKR) constitute a propeptide that is removed on maturation. At Trp-205 the chain carries Tryptophan amide. Residues 208-212 (SADPG) constitute a propeptide that is removed on maturation. Tryptophan amide is present on Trp-217. Residues 221–230 (ELVGLWGGKR) constitute a propeptide that is removed on maturation. Trp-236 is modified (tryptophan amide). A propeptide spanning residues 239 to 243 (SAEAG) is cleaved from the precursor. Tryptophan amide is present on residues Trp-248 and Trp-257. The disordered stretch occupies residues 258–475 (GRSADPLQPG…GRSAGSGQLG (218 aa)). The propeptide occupies 260–264 (SADPL). Residues Trp-269 and Trp-278 each carry the tryptophan amide modification. The propeptide occupies 281–284 (SADP). Tryptophan amide is present on residues Trp-290 and Trp-299. The propeptide occupies 302 to 305 (SADP). Trp-311 and Trp-320 each carry tryptophan amide. A propeptide spanning residues 323–326 (SADP) is cleaved from the precursor. Trp-332 and Trp-341 each carry tryptophan amide. Residues 344–347 (SADP) constitute a propeptide that is removed on maturation. Trp-353 is modified (tryptophan amide). Positions 356 to 366 (SPGLWGRSADP) are excised as a propeptide. A Tryptophan amide modification is found at Trp-372. Positions 376-387 (QNPGFWGRSADP) are excised as a propeptide. A tryptophan amide mark is found at Trp-393 and Trp-402. A propeptide spanning residues 405–408 (SADP) is cleaved from the precursor. Trp-414 and Trp-423 each carry tryptophan amide. The propeptide occupies 426 to 429 (SADP). Residues Trp-435 and Trp-444 each carry the tryptophan amide modification. The propeptide occupies 447 to 450 (SADP). Trp-456 and Trp-465 each carry tryptophan amide. The propeptide occupies 468 to 472 (SAGSG). A tryptophan amide mark is found at Trp-477 and Trp-487. The tract at residues 489 to 514 (RSAEPPQFEDLEDLKKKSAIPQPKGQ) is disordered. Positions 490 to 514 (SAEPPQFEDLEDLKKKSAIPQPKGQ) are excised as a propeptide.

It belongs to the LWamide neuropeptide family.

It localises to the secreted. Functionally, metamorphosin A may be part of an internal signaling system involved in control of metamorphosis. This Anthopleura elegantissima (Green aggregating anemone) protein is LWamide neuropeptides.